The following is a 475-amino-acid chain: Ribulose bisphosphate carboxylase large chain (475 aa).

The propeptide occupies 1-2 (MS). Pro-3 is modified (N-acetylproline). At Lys-14 the chain carries N6,N6,N6-trimethyllysine. Positions 123 and 173 each coordinate substrate. The active-site Proton acceptor is the Lys-175. Lys-177 contributes to the substrate binding site. Mg(2+) is bound by residues Lys-201, Asp-203, and Glu-204. Lys-201 carries the post-translational modification N6-carboxylysine. Catalysis depends on His-294, which acts as the Proton acceptor. Positions 295, 327, and 379 each coordinate substrate.

It belongs to the RuBisCO large chain family. Type I subfamily. As to quaternary structure, heterohexadecamer of 8 large chains and 8 small chains; disulfide-linked. The disulfide link is formed within the large subunit homodimers. Mg(2+) is required as a cofactor. In terms of processing, the disulfide bond which can form in the large chain dimeric partners within the hexadecamer appears to be associated with oxidative stress and protein turnover.

Its subcellular location is the plastid. It localises to the chloroplast. The enzyme catalyses 2 (2R)-3-phosphoglycerate + 2 H(+) = D-ribulose 1,5-bisphosphate + CO2 + H2O. The catalysed reaction is D-ribulose 1,5-bisphosphate + O2 = 2-phosphoglycolate + (2R)-3-phosphoglycerate + 2 H(+). RuBisCO catalyzes two reactions: the carboxylation of D-ribulose 1,5-bisphosphate, the primary event in carbon dioxide fixation, as well as the oxidative fragmentation of the pentose substrate in the photorespiration process. Both reactions occur simultaneously and in competition at the same active site. The sequence is that of Ribulose bisphosphate carboxylase large chain from Anthoceros angustus (Hornwort).